A 231-amino-acid polypeptide reads, in one-letter code: Phosphatidylserine decarboxylase proenzyme (231 aa).

The active-site Schiff-base intermediate with substrate; via pyruvic acid is S188. Residue S188 is modified to Pyruvic acid (Ser); by autocatalysis.

Belongs to the phosphatidylserine decarboxylase family. PSD-A subfamily. Heterodimer of a large membrane-associated beta subunit and a small pyruvoyl-containing alpha subunit. Pyruvate serves as cofactor. In terms of processing, is synthesized initially as an inactive proenzyme. Formation of the active enzyme involves a self-maturation process in which the active site pyruvoyl group is generated from an internal serine residue via an autocatalytic post-translational modification. Two non-identical subunits are generated from the proenzyme in this reaction, and the pyruvate is formed at the N-terminus of the alpha chain, which is derived from the carboxyl end of the proenzyme. The post-translation cleavage follows an unusual pathway, termed non-hydrolytic serinolysis, in which the side chain hydroxyl group of the serine supplies its oxygen atom to form the C-terminus of the beta chain, while the remainder of the serine residue undergoes an oxidative deamination to produce ammonia and the pyruvoyl prosthetic group on the alpha chain.

The protein resides in the cell membrane. The catalysed reaction is a 1,2-diacyl-sn-glycero-3-phospho-L-serine + H(+) = a 1,2-diacyl-sn-glycero-3-phosphoethanolamine + CO2. The protein operates within phospholipid metabolism; phosphatidylethanolamine biosynthesis; phosphatidylethanolamine from CDP-diacylglycerol: step 2/2. Catalyzes the formation of phosphatidylethanolamine (PtdEtn) from phosphatidylserine (PtdSer). This Rickettsia rickettsii (strain Iowa) protein is Phosphatidylserine decarboxylase proenzyme.